The primary structure comprises 350 residues: Protein CONSERVED ONLY IN THE GREEN LINEAGE 160, chloroplastic (350 aa).

A chloroplast-targeting transit peptide spans 1–46 (MAILSYISATSTTPPIPQDQSPNSRLPTKIILPNKKPEKWSTGVAP). Polar residues predominate over residues 7 to 26 (ISATSTTPPIPQDQSPNSRL). The segment at 7–58 (ISATSTTPPIPQDQSPNSRLPTKIILPNKKPEKWSTGVAPGEYGGPPTTTKL) is disordered. The residue at position 117 (Ser117) is a Phosphoserine. Helical transmembrane passes span 213–233 (KNKI…SAYI), 239–259 (IALS…MLGN), 276–296 (ANQP…RWNA), and 304–324 (FMHL…IATF).

Its subcellular location is the plastid. It localises to the chloroplast thylakoid membrane. In terms of biological role, facilitates the assembly of the membrane proton channel of the chloroplastic F-type ATPase. Specifically required for the efficient assembly and integration of the CF(0) subunit c into the chloroplastic ATPase complex in the thylakoid membrane. The protein is Protein CONSERVED ONLY IN THE GREEN LINEAGE 160, chloroplastic of Arabidopsis thaliana (Mouse-ear cress).